Here is a 172-residue protein sequence, read N- to C-terminus: Trypsin inhibitor 1A (172 aa).

2 disulfides stabilise this stretch: C40/C84 and C133/C139.

The protein belongs to the protease inhibitor I3 (leguminous Kunitz-type inhibitor) family.

WTI-1B inhibits trypsin stoichiometrically. The chain is Trypsin inhibitor 1A from Psophocarpus tetragonolobus (Winged bean).